Here is a 679-residue protein sequence, read N- to C-terminus: MSAPKNEMYYSLLEWFKTLNLNAPHADAESLADGVALAQALNQFAPESFTDAWLSKIKASAVGSNWRLRMSNLKKVTQSVYDYYSDVLNYSLSDFSKPDLQSIAEKCDLGELERLLQLVLGCAVNCAEKQSYITEIMCLEEELQANIMRALQELEATRQASSAEGGVVSSLSRSPRTGILDSKAVQEDRDALAQKCFETEKKMLLLIDEKTNLQQELHKLQQEFARLEQHSTVIGDDGVSLGPVQSGSVRYNELRRQLDLLKEELLQSEGAREDLKLKAQQQDTDLLHMQMRIEELMKSSAEVTTLKDEVDVLRESNDKLKICEAQLDTYKKKLEDYNDLKKQVKILEERSADYVQQNAQFEEDAKRYANTKGQVELFKKEIQDLHAKLDAESSKNVKLEFDNKNLDGKNLALQRAKDSLLKERDNLREAVDELKCGQLSSNTALTGTTVSRELQPSATVEKLQRLEAENKALREGQGGQTALAQLLDDANKRCENLREQLKTANERILSLSHASQSDDPILKESEFGKQIKQLMELNEQKTLQLEEAVTQSTSLQCKVTQLETNLSAREQEILVYDAKYRKCVEKAKEVIKSIDPRIASALDASVLEKSADLVEDEPKPKMSVMEEQLMTSAFYRLGVNAQRDAIDSKLAILMGSGQTFLARQRQSAPRKSLSAMKSK.

In terms of domain architecture, Calponin-homology (CH) spans 6 to 123; it reads NEMYYSLLEW…RLLQLVLGCA (118 aa). Coiled coils occupy residues 135-437 and 480-574; these read EIMC…LKCG and QTAL…QEIL.

Belongs to the hook family. Homodimer. Interacts with microtubules via its N-terminus.

It is found in the cytoplasm. The protein localises to the cytoskeleton. It localises to the endosome. The protein resides in the synapse. Involved in endocytic trafficking by stabilizing organelles of the endocytic pathway. Probably acts as a cytoskeletal linker protein required to tether endosome vesicles to the cytoskeleton. Involved in modulation of endocytosis at stages required for down-regulation of membrane proteins that control synapse size. Not involved in synaptic vesicle recycling. Required in R7 cells for boss endocytosis into multivesicular bodies (MVBs). Has a role in regulating adult longevity. This chain is Protein hook, found in Drosophila yakuba (Fruit fly).